Reading from the N-terminus, the 1074-residue chain is MILSITFQLDPISNNSTSLSNSIDNRSSINVTALQMQQGSKTYNLDQNSSYKTVFLAICQLFGIKESSAQDYCLQLESSKKYLNWPPQSDESKTKHIVKQLYESGETALVLQLNPTYRSSKWVKALNDSETNEKDIMFHLKYKLQENEFAESFIEQNGMEGILRMVTNGKGNAQTYSLASLRACLEYVSAMEIITKTPHLVKQLFSLVDSNVVGVCRGALELLFVLCDFRKEEGFKSVHLAAKGTAVAQGKKPYLNVIKLLDSGDLETKINAFTLLNVLLSNCPTDEKVGKLCKKWGELGLDDKLRSLTSIQQQEFQIQLEIYEETSGVNLRTKASRLEAICNRLKSKLTEYEAQQPLIAILKEELKLAQQLIKEASTDRVFLSSHPMQRYLGPTIQSYPADLSFLKTTAAERDKINEFEKKILAINEQLRQETKLSEELKNQVLANKKQFDSTIAELNEENQRLTQVEVKFKLQQSISPSQDSSNNQKASSSSSNTSTLNDSDIQSIQSSLKEATLEIERLKLAIEEKMPPNEAQQIFSQSLITTAAFTPTSPDISNDGQPISGGGAPPPSPSPPPPISGGGAPPPPPPPPPPPSGGGAPPPPPPPPPSGGKKAGAPGAPPTGPAAIQPNKPVINPSSKMKPLYWKRIILPPSNRNESIWDQVLEPTFDSKDFENLFCAKKKAVDSSLSTNPSSTTGKEGEKVKLVSLVDIKKSNSIAFMLAKIPTAEGLKKAIDTVDNSILGKEIIKTLITNVPTEQDYQLIKGSEIHESKLDKPERWILEIYGFPMMKERLVAWLFQLEYQEMYNNIIQILEKLQNAIKDTKSSDSLKKILGIVLVLGNYMNGGSGRGQADGFTLEILDSLATSKDVENKTSLLDYVSKISMEKYPKTMNVAQELDSLKLVQLSISDMSTDINDLEKQFNISKNNCKKVLEANIPSSSKFQSTIGSFLEKTEIDIKNLKENQKNIVDSFIQLVEFFGYPKSYATTASCQQFFNSIYSFSLLFSKQCQKIEKEREALAKASGDNGAVQNKKIAGGADPLAALANAIKLGQTGLRKRPGPENSSGGSQLNLNK.

A GBD/FH3 domain is found at 34–423; the sequence is LQMQQGSKTY…DKINEFEKKI (390 aa). 2 disordered regions span residues 476–507 and 549–639; these read QSISPSQDSSNNQKASSSSSNTSTLNDSDIQS and FTPT…NPSS. Residues 481-503 are compositionally biased toward low complexity; that stretch reads SQDSSNNQKASSSSSNTSTLNDS. The stretch at 502–530 forms a coiled coil; sequence DSDIQSIQSSLKEATLEIERLKLAIEEKM. Positions 549 to 561 are enriched in polar residues; it reads FTPTSPDISNDGQ. Pro residues predominate over residues 568 to 610; that stretch reads APPPSPSPPPPISGGGAPPPPPPPPPPPSGGGAPPPPPPPPPS. In terms of domain architecture, FH1 spans 597–623; that stretch reads GGGAPPPPPPPPPSGGKKAGAPGAPPT. In terms of domain architecture, FH2 spans 631–1031; it reads NKPVINPSSK…ASGDNGAVQN (401 aa). A coiled-coil region spans residues 914 to 971; it reads DINDLEKQFNISKNNCKKVLEANIPSSSKFQSTIGSFLEKTEIDIKNLKENQKNIVDS. A DAD domain is found at 1037–1073; the sequence is GADPLAALANAIKLGQTGLRKRPGPENSSGGSQLNLN. The segment at 1053-1074 is disordered; sequence TGLRKRPGPENSSGGSQLNLNK. Polar residues predominate over residues 1062 to 1074; the sequence is ENSSGGSQLNLNK.

Belongs to the formin homology family. Diaphanous subfamily. Interacts (via GBD/FH3 domain) with activated Rho-GTPases.

Functionally, formins play an important role in the nucleation of actin and the formation of linear actin filaments. The chain is Formin-G (forG) from Dictyostelium discoideum (Social amoeba).